The chain runs to 127 residues: Protein ApaG (127 aa).

Positions 3-127 (EGKKYQINIS…FTLAMPRVLH (125 aa)) constitute an ApaG domain.

The chain is Protein ApaG from Thiobacillus denitrificans (strain ATCC 25259 / T1).